A 393-amino-acid chain; its full sequence is Protein TsgA (393 aa).

Helical transmembrane passes span 11 to 31, 51 to 71, 78 to 98, 101 to 121, 134 to 154, 162 to 182, 206 to 226, 245 to 265, 273 to 293, 297 to 317, 332 to 352, and 361 to 381; these read WISFLSYALTGALVIVTGMVM, FLNAGILISIFLNAWLMEIVP, FGFLLMVLAVAGLMFSHSLAL, AAMFILGVVSGITMSIGTFLI, LLFTDSFFSMAGMIFPMIAAF, WYWVYACIGLVYVAIFILTFG, IGVLFLSIAALCYILGQLGFI, TLVSNFWMSYMVGMWAFSFIL, ILTVLAGLAAILMYVFNTGTP, AWSILALGFFSSAIYTTIITL, FVLTCGTIGTMLTFVVTGPIV, and LLTANGLYAVVFVMCFLLGFV.

The protein belongs to the major facilitator superfamily. TsgA family.

The protein localises to the cell inner membrane. This is Protein TsgA from Escherichia coli O7:K1 (strain IAI39 / ExPEC).